Reading from the N-terminus, the 404-residue chain is Argininosuccinate synthase (404 aa).

ATP contacts are provided by residues 10–18 (AYSGGVDTS) and Ala-38. Tyr-89 serves as a coordination point for L-citrulline. Gly-119 is a binding site for ATP. Residues Thr-121, Asn-125, and Asp-126 each contribute to the L-aspartate site. L-citrulline is bound at residue Asn-125. Residues Arg-129, Ser-177, Ser-186, Glu-262, and Tyr-274 each coordinate L-citrulline.

Belongs to the argininosuccinate synthase family. Type 1 subfamily. As to quaternary structure, homotetramer.

It is found in the cytoplasm. It carries out the reaction L-citrulline + L-aspartate + ATP = 2-(N(omega)-L-arginino)succinate + AMP + diphosphate + H(+). Its pathway is amino-acid biosynthesis; L-arginine biosynthesis; L-arginine from L-ornithine and carbamoyl phosphate: step 2/3. In Prochlorococcus marinus subsp. pastoris (strain CCMP1986 / NIES-2087 / MED4), this protein is Argininosuccinate synthase.